A 252-amino-acid chain; its full sequence is Imidazole glycerol phosphate synthase subunit HisF (252 aa).

Residues Asp-11 and Asp-130 contribute to the active site.

Belongs to the HisA/HisF family. As to quaternary structure, heterodimer of HisH and HisF.

It is found in the cytoplasm. The catalysed reaction is 5-[(5-phospho-1-deoxy-D-ribulos-1-ylimino)methylamino]-1-(5-phospho-beta-D-ribosyl)imidazole-4-carboxamide + L-glutamine = D-erythro-1-(imidazol-4-yl)glycerol 3-phosphate + 5-amino-1-(5-phospho-beta-D-ribosyl)imidazole-4-carboxamide + L-glutamate + H(+). Its pathway is amino-acid biosynthesis; L-histidine biosynthesis; L-histidine from 5-phospho-alpha-D-ribose 1-diphosphate: step 5/9. Functionally, IGPS catalyzes the conversion of PRFAR and glutamine to IGP, AICAR and glutamate. The HisF subunit catalyzes the cyclization activity that produces IGP and AICAR from PRFAR using the ammonia provided by the HisH subunit. The sequence is that of Imidazole glycerol phosphate synthase subunit HisF from Acinetobacter baylyi (strain ATCC 33305 / BD413 / ADP1).